Here is a 382-residue protein sequence, read N- to C-terminus: Mannitol-1-phosphate 5-dehydrogenase (382 aa).

A3 to G14 contributes to the NAD(+) binding site.

It belongs to the mannitol dehydrogenase family.

It carries out the reaction D-mannitol 1-phosphate + NAD(+) = beta-D-fructose 6-phosphate + NADH + H(+). The polypeptide is Mannitol-1-phosphate 5-dehydrogenase (Mannheimia succiniciproducens (strain KCTC 0769BP / MBEL55E)).